The sequence spans 198 residues: Peptide methionine sulfoxide reductase MsrA 2 (198 aa).

Residue cysteine 32 is part of the active site.

The protein belongs to the MsrA Met sulfoxide reductase family.

The catalysed reaction is L-methionyl-[protein] + [thioredoxin]-disulfide + H2O = L-methionyl-(S)-S-oxide-[protein] + [thioredoxin]-dithiol. It catalyses the reaction [thioredoxin]-disulfide + L-methionine + H2O = L-methionine (S)-S-oxide + [thioredoxin]-dithiol. Functionally, has an important function as a repair enzyme for proteins that have been inactivated by oxidation. Catalyzes the reversible oxidation-reduction of methionine sulfoxide in proteins to methionine. The chain is Peptide methionine sulfoxide reductase MsrA 2 (msrA2) from Rhizobium meliloti (strain 1021) (Ensifer meliloti).